A 149-amino-acid chain; its full sequence is ATP synthase epsilon chain (149 aa).

Basic and acidic residues-rich tracts occupy residues Asp99 to Glu116 and Arg123 to Arg134. Residues Asp99–Ser149 form a disordered region.

It belongs to the ATPase epsilon chain family. In terms of assembly, F-type ATPases have 2 components, CF(1) - the catalytic core - and CF(0) - the membrane proton channel. CF(1) has five subunits: alpha(3), beta(3), gamma(1), delta(1), epsilon(1). CF(0) has three main subunits: a, b and c.

The protein localises to the cell inner membrane. Its function is as follows. Produces ATP from ADP in the presence of a proton gradient across the membrane. This chain is ATP synthase epsilon chain, found in Salinibacter ruber (strain DSM 13855 / M31).